The chain runs to 89 residues: Small ribosomal subunit protein uS15 (89 aa).

It belongs to the universal ribosomal protein uS15 family. In terms of assembly, part of the 30S ribosomal subunit. Forms a bridge to the 50S subunit in the 70S ribosome, contacting the 23S rRNA.

Its function is as follows. One of the primary rRNA binding proteins, it binds directly to 16S rRNA where it helps nucleate assembly of the platform of the 30S subunit by binding and bridging several RNA helices of the 16S rRNA. Functionally, forms an intersubunit bridge (bridge B4) with the 23S rRNA of the 50S subunit in the ribosome. This Halalkalibacterium halodurans (strain ATCC BAA-125 / DSM 18197 / FERM 7344 / JCM 9153 / C-125) (Bacillus halodurans) protein is Small ribosomal subunit protein uS15.